A 120-amino-acid polypeptide reads, in one-letter code: Small ribosomal subunit protein uS13 (120 aa).

The segment at glycine 93–lysine 120 is disordered. Basic residues predominate over residues alanine 105 to lysine 120.

It belongs to the universal ribosomal protein uS13 family. As to quaternary structure, part of the 30S ribosomal subunit. Has been shown to cross-link to S19 forming a loose heterodimer. Forms two bridges to the 50S subunit in the 70S ribosome.

Located at the top of the head of the 30S subunit, it contacts several helices of the 16S rRNA. In the 70S ribosome it contacts the 23S rRNA (bridge B1a) and protein L5 of the 50S subunit (bridge B1b), connecting the 2 subunits; these bridges are implicated in subunit movement. Contacts the tRNA in the A and P-sites. The polypeptide is Small ribosomal subunit protein uS13 (rpsM) (Geobacillus stearothermophilus (Bacillus stearothermophilus)).